Consider the following 662-residue polypeptide: Bifunctional polymyxin resistance protein ArnA (662 aa).

Positions 1-307 (MTSKAVVFAY…ELGLVEGARL (307 aa)) are formyltransferase ArnAFT. The Proton donor; for formyltransferase activity role is filled by His-106. Residues Arg-116 and 138-142 (IERAD) contribute to the (6R)-10-formyltetrahydrofolate site. The interval 316–662 (RRTRVLILGV…EALREREAQA (347 aa)) is dehydrogenase ArnADH. Residues Asp-349 and 370-371 (DI) contribute to the NAD(+) site. Residues Ala-395, Tyr-400, and 434–435 (TS) each bind UDP-alpha-D-glucuronate. Glu-436 (proton acceptor; for decarboxylase activity) is an active-site residue. Residues Arg-462, Asn-493, 527 to 536 (RLVDGGAQKR), and Tyr-614 contribute to the UDP-alpha-D-glucuronate site. The active-site Proton donor; for decarboxylase activity is the Arg-620.

In the N-terminal section; belongs to the Fmt family. UDP-L-Ara4N formyltransferase subfamily. The protein in the C-terminal section; belongs to the NAD(P)-dependent epimerase/dehydratase family. UDP-glucuronic acid decarboxylase subfamily. As to quaternary structure, homohexamer, formed by a dimer of trimers.

The enzyme catalyses UDP-alpha-D-glucuronate + NAD(+) = UDP-beta-L-threo-pentopyranos-4-ulose + CO2 + NADH. The catalysed reaction is UDP-4-amino-4-deoxy-beta-L-arabinose + (6R)-10-formyltetrahydrofolate = UDP-4-deoxy-4-formamido-beta-L-arabinose + (6S)-5,6,7,8-tetrahydrofolate + H(+). The protein operates within nucleotide-sugar biosynthesis; UDP-4-deoxy-4-formamido-beta-L-arabinose biosynthesis; UDP-4-deoxy-4-formamido-beta-L-arabinose from UDP-alpha-D-glucuronate: step 1/3. It participates in nucleotide-sugar biosynthesis; UDP-4-deoxy-4-formamido-beta-L-arabinose biosynthesis; UDP-4-deoxy-4-formamido-beta-L-arabinose from UDP-alpha-D-glucuronate: step 3/3. Its pathway is bacterial outer membrane biogenesis; lipopolysaccharide biosynthesis. In terms of biological role, bifunctional enzyme that catalyzes the oxidative decarboxylation of UDP-glucuronic acid (UDP-GlcUA) to UDP-4-keto-arabinose (UDP-Ara4O) and the addition of a formyl group to UDP-4-amino-4-deoxy-L-arabinose (UDP-L-Ara4N) to form UDP-L-4-formamido-arabinose (UDP-L-Ara4FN). The modified arabinose is attached to lipid A and is required for resistance to polymyxin and cationic antimicrobial peptides. This chain is Bifunctional polymyxin resistance protein ArnA, found in Pseudomonas aeruginosa (strain ATCC 15692 / DSM 22644 / CIP 104116 / JCM 14847 / LMG 12228 / 1C / PRS 101 / PAO1).